A 451-amino-acid chain; its full sequence is COBRA-like protein 6 (451 aa).

An N-terminal signal peptide occupies residues 1–21 (MAVLGSLLLLILAATLSVAVA). Residues N30, N155, N163, N202, N227, N323, N338, and N357 are each glycosylated (N-linked (GlcNAc...) asparagine). Residue N426 is the site of GPI-anchor amidated asparagine attachment. Residues 427–451 (AAPPAAASLVGSAVAMAALVFFLMA) constitute a propeptide, removed in mature form.

Belongs to the COBRA family.

It is found in the cell membrane. In terms of biological role, involved in determining the orientation of cell expansion, probably by playing an important role in cellulose deposition. May act by recruiting cellulose synthesizing complexes to discrete positions on the cell surface. The polypeptide is COBRA-like protein 6 (BC1L7) (Oryza sativa subsp. japonica (Rice)).